The chain runs to 127 residues: Probable soluble cytochrome b562 1 (127 aa).

The N-terminal stretch at 1–21 is a signal peptide; sequence MRKIPIIAGVFSLLITSCTFA. Positions 28 and 123 each coordinate heme b.

The protein belongs to the cytochrome b562 family. Heme b is required as a cofactor.

It localises to the periplasm. Its function is as follows. Electron-transport protein of unknown function. In Yersinia pestis, this protein is Probable soluble cytochrome b562 1 (cybC1).